Reading from the N-terminus, the 203-residue chain is Recombination protein RecR (203 aa).

A C4-type zinc finger spans residues 56–71 (CAVCGNVSDDERCRIC). The region spanning 79–179 (SVVCVVEEPK…TVTRIASGLP (101 aa)) is the Toprim domain.

The protein belongs to the RecR family.

May play a role in DNA repair. It seems to be involved in an RecBC-independent recombinational process of DNA repair. It may act with RecF and RecO. The polypeptide is Recombination protein RecR (Mycobacterium avium (strain 104)).